The primary structure comprises 185 residues: Ribosome-recycling factor (185 aa).

It belongs to the RRF family.

The protein resides in the cytoplasm. In terms of biological role, responsible for the release of ribosomes from messenger RNA at the termination of protein biosynthesis. May increase the efficiency of translation by recycling ribosomes from one round of translation to another. This Marinomonas sp. (strain MWYL1) protein is Ribosome-recycling factor.